An 838-amino-acid chain; its full sequence is Protein translocase subunit SecA (838 aa).

Residues Gln85, 103–107 (GEGKT), and Asp493 each bind ATP. Residues Cys823, Cys825, Cys834, and His835 each contribute to the Zn(2+) site.

It belongs to the SecA family. As to quaternary structure, monomer and homodimer. Part of the essential Sec protein translocation apparatus which comprises SecA, SecYEG and auxiliary proteins SecDF. Other proteins may also be involved. Requires Zn(2+) as cofactor.

Its subcellular location is the cell membrane. The protein resides in the cytoplasm. It catalyses the reaction ATP + H2O + cellular proteinSide 1 = ADP + phosphate + cellular proteinSide 2.. Its function is as follows. Part of the Sec protein translocase complex. Interacts with the SecYEG preprotein conducting channel. Has a central role in coupling the hydrolysis of ATP to the transfer of proteins into and across the cell membrane, serving as an ATP-driven molecular motor driving the stepwise translocation of polypeptide chains across the membrane. The polypeptide is Protein translocase subunit SecA (Streptococcus gordonii (strain Challis / ATCC 35105 / BCRC 15272 / CH1 / DL1 / V288)).